The sequence spans 145 residues: uncharacterized protein (145 aa).

An N-terminal signal peptide occupies residues Met1–Ala29. Residues Lys67–Leu101 are a coiled coil.

This is an uncharacterized protein from Bacillus subtilis (strain 168).